Consider the following 98-residue polypeptide: uncharacterized protein (98 aa).

Positions 1 to 63 (MPRDKKLVHR…NGHSQPAIVA (63 aa)) are disordered. Residues 14-29 (DVEDEDNDQREEEWSD) show a composition bias toward acidic residues. A compositionally biased stretch (polar residues) spans 48-57 (EPSSASNGHS).

This is an uncharacterized protein from Aedes vexans (Inland floodwater mosquito).